The sequence spans 892 residues: Alanine--tRNA ligase (892 aa).

4 residues coordinate Zn(2+): His596, His600, Cys700, and His704.

Belongs to the class-II aminoacyl-tRNA synthetase family. The cofactor is Zn(2+).

It localises to the cytoplasm. It catalyses the reaction tRNA(Ala) + L-alanine + ATP = L-alanyl-tRNA(Ala) + AMP + diphosphate. Its function is as follows. Catalyzes the attachment of alanine to tRNA(Ala) in a two-step reaction: alanine is first activated by ATP to form Ala-AMP and then transferred to the acceptor end of tRNA(Ala). Also edits incorrectly charged Ser-tRNA(Ala) and Gly-tRNA(Ala) via its editing domain. This is Alanine--tRNA ligase from Methanococcus vannielii (strain ATCC 35089 / DSM 1224 / JCM 13029 / OCM 148 / SB).